A 78-amino-acid polypeptide reads, in one-letter code: Omega-conotoxin-like VnMKLT1-0111 (78 aa).

The signal sequence occupies residues 1–22 (MKLTCMMIVAVLFLTAWTFVTA). The propeptide occupies 23–48 (DSRNGLEYLFPKAHYEMNPEASKLNK). Disulfide bonds link Cys-52-Cys-69, Cys-59-Cys-73, and Cys-68-Cys-77.

This sequence belongs to the conotoxin O1 superfamily. As to expression, expressed by the venom duct.

Its subcellular location is the secreted. Omega-conotoxins act at presynaptic membranes, they bind and block voltage-gated calcium channels (Cav). This chain is Omega-conotoxin-like VnMKLT1-0111, found in Conus ventricosus (Mediterranean cone).